We begin with the raw amino-acid sequence, 120 residues long: NAD(P)H-quinone oxidoreductase subunit 3 (120 aa).

The next 3 helical transmembrane spans lie at 6-26 (GYDA…LALV), 64-84 (MFAL…PWAV), and 89-109 (LGLL…VALA).

Belongs to the complex I subunit 3 family. NDH-1 can be composed of about 15 different subunits; different subcomplexes with different compositions have been identified which probably have different functions.

The protein resides in the cellular thylakoid membrane. It carries out the reaction a plastoquinone + NADH + (n+1) H(+)(in) = a plastoquinol + NAD(+) + n H(+)(out). The enzyme catalyses a plastoquinone + NADPH + (n+1) H(+)(in) = a plastoquinol + NADP(+) + n H(+)(out). Its function is as follows. NDH-1 shuttles electrons from an unknown electron donor, via FMN and iron-sulfur (Fe-S) centers, to quinones in the respiratory and/or the photosynthetic chain. The immediate electron acceptor for the enzyme in this species is believed to be plastoquinone. Couples the redox reaction to proton translocation, and thus conserves the redox energy in a proton gradient. Cyanobacterial NDH-1 also plays a role in inorganic carbon-concentration. This chain is NAD(P)H-quinone oxidoreductase subunit 3, found in Prochlorococcus marinus (strain MIT 9313).